We begin with the raw amino-acid sequence, 228 residues long: Vesicle transport protein SEC20 (228 aa).

At 1-199 the chain is on the cytoplasmic side; the sequence is MAAPQDVHVR…LITKYNRREL (199 aa). Residues 37-90 adopt a coiled-coil conformation; the sequence is LSELTELNTKVKEKFQQLKHRIQELEQSAKEQDKESEKQLLLQEVENHKKQMLS. A helical; Anchor for type IV membrane protein transmembrane segment spans residues 200–220; it reads TDKLLIFLALALFLATVLYIV. The Lumenal segment spans residues 221–228; sequence KKRLFPFL.

It belongs to the SEC20 family. Component of a SNARE complex consisting of STX18, USE1L, BNIP1/SEC20L and SEC22B. Interacts directly with STX18, RINT1/TIP20L and NAPA. Interacts with ZW10 through RINT1. Interacts with BCL2. Interacts with RNF186. Interacts with RNF185. Interacts with SQSTM1; increased by 'Lys-63'-linked polyubiquitination of BNIP1. Polyubiquitinated. 'Lys-63'-linked polyubiquitination by RNF185 increases the interaction with the autophagy receptor SQSTM1. Undergoes 'Lys-29'- and 'Lys-63'-linked polyubiquitination by RNF186 that may regulate BNIP1 localization to the mitochondrion.

The protein localises to the endoplasmic reticulum membrane. Its subcellular location is the mitochondrion membrane. Functionally, as part of a SNARE complex may be involved in endoplasmic reticulum membranes fusion and be required for the maintenance of endoplasmic reticulum organization. Also plays a role in apoptosis. It is for instance required for endoplasmic reticulum stress-induced apoptosis. As a substrate of RNF185 interacting with SQSTM1, might also be involved in mitochondrial autophagy. In Rattus norvegicus (Rat), this protein is Vesicle transport protein SEC20.